The primary structure comprises 382 residues: Galactose-1-phosphate uridylyltransferase (382 aa).

2 residues coordinate Zn(2+): Cys-52 and Cys-55. Residues Ala-61 and 77–78 contribute to the UDP-alpha-D-glucose site; that span reads ND. His-121 contributes to the Zn(2+) binding site. Residue Asn-185 coordinates UDP-alpha-D-glucose. His-196 provides a ligand contact to Zn(2+). His-198 functions as the Tele-UMP-histidine intermediate in the catalytic mechanism. Gln-200 contacts UDP-alpha-D-glucose. Residues Glu-214, His-313, His-330, and His-332 each coordinate Fe cation. UDP-alpha-D-glucose-binding positions include 345-348 and 350-351; these read KFLV and FE.

The protein belongs to the galactose-1-phosphate uridylyltransferase type 1 family. Homodimer. Zn(2+) is required as a cofactor.

The enzyme catalyses alpha-D-galactose 1-phosphate + UDP-alpha-D-glucose = alpha-D-glucose 1-phosphate + UDP-alpha-D-galactose. It functions in the pathway carbohydrate metabolism; galactose metabolism. Essential for growth on galactose but not for cellulase induction. The polypeptide is Galactose-1-phosphate uridylyltransferase (gal7) (Hypocrea jecorina (Trichoderma reesei)).